The following is a 167-amino-acid chain: SsrA-binding protein (167 aa).

Residues 139–158 (QNHDKRDAAKERDWQRDKQR) show a composition bias toward basic and acidic residues. The segment at 139-167 (QNHDKRDAAKERDWQRDKQRVMRRHNRDA) is disordered.

Belongs to the SmpB family.

It localises to the cytoplasm. In terms of biological role, required for rescue of stalled ribosomes mediated by trans-translation. Binds to transfer-messenger RNA (tmRNA), required for stable association of tmRNA with ribosomes. tmRNA and SmpB together mimic tRNA shape, replacing the anticodon stem-loop with SmpB. tmRNA is encoded by the ssrA gene; the 2 termini fold to resemble tRNA(Ala) and it encodes a 'tag peptide', a short internal open reading frame. During trans-translation Ala-aminoacylated tmRNA acts like a tRNA, entering the A-site of stalled ribosomes, displacing the stalled mRNA. The ribosome then switches to translate the ORF on the tmRNA; the nascent peptide is terminated with the 'tag peptide' encoded by the tmRNA and targeted for degradation. The ribosome is freed to recommence translation, which seems to be the essential function of trans-translation. This is SsrA-binding protein from Xanthomonas oryzae pv. oryzae (strain MAFF 311018).